Here is a 361-residue protein sequence, read N- to C-terminus: Chorismate synthase (361 aa).

Positions 48 and 54 each coordinate NADP(+). Residues 125–127 (RSS), 238–239 (NA), Gly-278, 293–297 (KPTSS), and Arg-319 contribute to the FMN site.

The protein belongs to the chorismate synthase family. As to quaternary structure, homotetramer. Requires FMNH2 as cofactor.

It carries out the reaction 5-O-(1-carboxyvinyl)-3-phosphoshikimate = chorismate + phosphate. It functions in the pathway metabolic intermediate biosynthesis; chorismate biosynthesis; chorismate from D-erythrose 4-phosphate and phosphoenolpyruvate: step 7/7. Catalyzes the anti-1,4-elimination of the C-3 phosphate and the C-6 proR hydrogen from 5-enolpyruvylshikimate-3-phosphate (EPSP) to yield chorismate, which is the branch point compound that serves as the starting substrate for the three terminal pathways of aromatic amino acid biosynthesis. This reaction introduces a second double bond into the aromatic ring system. This is Chorismate synthase from Salmonella paratyphi A (strain ATCC 9150 / SARB42).